The sequence spans 196 residues: Large ribosomal subunit protein uL18 (196 aa).

Belongs to the universal ribosomal protein uL18 family. In terms of assembly, part of the 50S ribosomal subunit. Contacts the 5S and 23S rRNAs.

In terms of biological role, this is one of the proteins that bind and probably mediate the attachment of the 5S RNA into the large ribosomal subunit, where it forms part of the central protuberance. The chain is Large ribosomal subunit protein uL18 from Sulfurisphaera tokodaii (strain DSM 16993 / JCM 10545 / NBRC 100140 / 7) (Sulfolobus tokodaii).